The chain runs to 234 residues: Opacity protein opA65 (234 aa).

A1 is a signal peptide. Positions T154–E179 are disordered.

Belongs to the opacity porin family.

The protein resides in the cell outer membrane. Implicated in a number of adherence functions. OPA proteins are implicated in pathogenesis and are subject to phase variation. The sequence is that of Opacity protein opA65 from Neisseria gonorrhoeae.